The following is a 218-amino-acid chain: MASRGGGRGRGRGQLTFNVEAVGIGKGDALPPPTLQPSPLFPPLEFRPVPLPSGEEGEYVLALKQELRGAMRQLPYFIRPAVPKRDVERYSDKYQMSGPIDNAIDWNPDWRRLPRELKIRVRKLQKERITILLPKRPPKTTEDKEETIQKLETLEKKEEEVTSEEDEEKEEEEEKEEEEEEEYDEEEHEEETDYIMSYFDNGEDFGGDSDDNMDEAIY.

Residues 133-218 (LPKRPPKTTE…SDDNMDEAIY (86 aa)) form a disordered region. Residues 139–160 (KTTEDKEETIQKLETLEKKEEE) show a composition bias toward basic and acidic residues. Composition is skewed to acidic residues over residues 161–193 (VTSE…EETD) and 201–218 (NGED…EAIY).

It belongs to the eukaryotic RPC7 RNA polymerase subunit family. Component of the RNA polymerase III (Pol III) complex consisting of 17 subunits. Pol III exists as two alternative complexes defined by the mutually exclusive incorporation of subunit POLR3G/RPC7alpha or POLR3GL/RPC7beta. Found in a trimeric complex with POLR3C/RPC3 and POLR3F/RPC6. Directly interacts with POLR3C. Widely expressed. Expressed in CD4-positive T cells.

It localises to the nucleus. In terms of biological role, DNA-dependent RNA polymerase catalyzes the transcription of DNA into RNA using the four ribonucleoside triphosphates as substrates. Specific peripheric component of RNA polymerase III which synthesizes small RNAs, such as 5S rRNA and tRNAs. The polypeptide is DNA-directed RNA polymerase III subunit RPC7-like (Homo sapiens (Human)).